The primary structure comprises 212 residues: Large ribosomal subunit protein uL3 (212 aa).

The tract at residues 130–155 is disordered; it reads KRGNMTHGSKNHRLPGSTGAGTTPGR.

It belongs to the universal ribosomal protein uL3 family. In terms of assembly, part of the 50S ribosomal subunit. Forms a cluster with proteins L14 and L19.

Functionally, one of the primary rRNA binding proteins, it binds directly near the 3'-end of the 23S rRNA, where it nucleates assembly of the 50S subunit. This chain is Large ribosomal subunit protein uL3, found in Rippkaea orientalis (strain PCC 8801 / RF-1) (Cyanothece sp. (strain PCC 8801)).